The sequence spans 544 residues: Aspartokinase (544 aa).

The region spanning 463–535 (LVGKQMVNFI…SAIGDSSAVD (73 aa)) is the ACT domain.

This sequence belongs to the aspartokinase family.

The catalysed reaction is L-aspartate + ATP = 4-phospho-L-aspartate + ADP. It functions in the pathway amino-acid biosynthesis; L-methionine biosynthesis via de novo pathway; L-homoserine from L-aspartate: step 1/3. It participates in amino-acid biosynthesis; L-threonine biosynthesis; L-threonine from L-aspartate: step 1/5. Its function is as follows. Phosphorylates aspartate, the first step in the biosynthesis of amino acids that derive from aspartate (the aspartate family of amino acids), including methioinine and threonine, the latter of which is a precursor to isoleucine. In Candida albicans (strain SC5314 / ATCC MYA-2876) (Yeast), this protein is Aspartokinase.